The following is a 205-amino-acid chain: MIGYLEGTLLKKKEDRILLLAGPVGYEVLLPAVVMASLQGKREGDPLFFHIYHYQTERQPKPVLIGFNTEEEKDFFHLLITVEAIGPLKAVQCLTLPIGEVAEAIETGNSALLGQLKGVGGRTAQKMIATLKGKVGRFADAGHSSAPDVPVTGSLADQTVEVLVGQLGYKPNEARLMVAGALKRNPDVSTPEALFDEIFKHGQAQ.

A domain I region spans residues 1–68 (MIGYLEGTLL…QPKPVLIGFN (68 aa)). The segment at 69 to 146 (TEEEKDFFHL…RFADAGHSSA (78 aa)) is domain II. Positions 147–151 (PDVPV) are flexible linker. The interval 152–205 (TGSLADQTVEVLVGQLGYKPNEARLMVAGALKRNPDVSTPEALFDEIFKHGQAQ) is domain III.

The protein belongs to the RuvA family. In terms of assembly, homotetramer. Forms an RuvA(8)-RuvB(12)-Holliday junction (HJ) complex. HJ DNA is sandwiched between 2 RuvA tetramers; dsDNA enters through RuvA and exits via RuvB. An RuvB hexamer assembles on each DNA strand where it exits the tetramer. Each RuvB hexamer is contacted by two RuvA subunits (via domain III) on 2 adjacent RuvB subunits; this complex drives branch migration. In the full resolvosome a probable DNA-RuvA(4)-RuvB(12)-RuvC(2) complex forms which resolves the HJ.

The protein resides in the cytoplasm. Its function is as follows. The RuvA-RuvB-RuvC complex processes Holliday junction (HJ) DNA during genetic recombination and DNA repair, while the RuvA-RuvB complex plays an important role in the rescue of blocked DNA replication forks via replication fork reversal (RFR). RuvA specifically binds to HJ cruciform DNA, conferring on it an open structure. The RuvB hexamer acts as an ATP-dependent pump, pulling dsDNA into and through the RuvAB complex. HJ branch migration allows RuvC to scan DNA until it finds its consensus sequence, where it cleaves and resolves the cruciform DNA. The sequence is that of Holliday junction branch migration complex subunit RuvA from Desulfosudis oleivorans (strain DSM 6200 / JCM 39069 / Hxd3) (Desulfococcus oleovorans).